A 445-amino-acid polypeptide reads, in one-letter code: MAPPPPAAPPCPGLTELALRVARRIQAGGAPDGNLVFSPLSVYAALALVAAGAGGDTLAELLGVLGAGSRDELAGLAGRLAGRALADRSRAGGPRVSFVSGVWYDKTRTLSPSFRDAAVQSFMAETRAADFREKPGEAVNQINAWARKATNKLIDTVIDGGLPADTDVVVANAVYFKGKWKDPFTKALTKTGKFHRLDGAAVDASFMQRGTYYDTGDYIACHDGFKVLRLPYDDERRRSPASPPPPPSTPRFSLCVFLPDALDGLWDLLDEIASTPGFLQAKLPTRHASVGELKLPKFKLTFSGDIAGVLRGLGLDATFSDGEADFSKMVEDDGGRRPLSMRSLVHKAVIEVNEEGTEAAASAINMVCGMSMTPEPRPVPVDFVADHPFAFFVIEETTGAVVFAGHVLDPSSTAGALDDDDDDDEFVVMGCLRYLLDRCMAFVGV.

Positions 356-380 (GTEAAASAINMVCGMSMTPEPRPVP) are RCL.

It belongs to the serpin family.

Probable serine protease inhibitor. The chain is Putative serpin-Z5 from Oryza sativa subsp. japonica (Rice).